The sequence spans 1347 residues: Spermatogenesis-associated protein 31A7 (1347 aa).

The helical transmembrane segment at 23-43 threads the bilayer; that stretch reads PWVLDIFLTLVFALGFFFLLL. 7 disordered regions span residues 55–88, 106–233, 374–397, 628–658, 900–955, 1084–1161, and 1313–1335; these read PSPS…RECP, GPHL…RDST, QDTT…GPQK, DESP…EAQK, RGIP…REAV, VHEE…PSVS, and KAVS…SHHH. Basic residues predominate over residues 60-82; that stretch reads GKRKCPVGRRRRPRGRMKNHSLR. Polar residues predominate over residues 165-178; that stretch reads LASTPSPGPMTTSV. Pro residues predominate over residues 198–211; that stretch reads PEPPALFPHPPHTP. 2 stretches are compositionally biased toward polar residues: residues 631–651 and 927–948; these read PGTS…STGE and LTYS…SSKA. 2 stretches are compositionally biased toward basic and acidic residues: residues 1108–1127 and 1137–1146; these read HKSE…RLEG and RKTEDTHQDE.

It belongs to the SPATA31 family.

The protein resides in the membrane. Its function is as follows. May play a role in spermatogenesis. In Homo sapiens (Human), this protein is Spermatogenesis-associated protein 31A7.